The primary structure comprises 200 residues: NADH-quinone oxidoreductase subunit C (200 aa).

It belongs to the complex I 30 kDa subunit family. NDH-1 is composed of 14 different subunits. Subunits NuoB, C, D, E, F, and G constitute the peripheral sector of the complex.

The protein localises to the cell inner membrane. The enzyme catalyses a quinone + NADH + 5 H(+)(in) = a quinol + NAD(+) + 4 H(+)(out). Its function is as follows. NDH-1 shuttles electrons from NADH, via FMN and iron-sulfur (Fe-S) centers, to quinones in the respiratory chain. The immediate electron acceptor for the enzyme in this species is believed to be ubiquinone. Couples the redox reaction to proton translocation (for every two electrons transferred, four hydrogen ions are translocated across the cytoplasmic membrane), and thus conserves the redox energy in a proton gradient. The sequence is that of NADH-quinone oxidoreductase subunit C from Ralstonia nicotianae (strain ATCC BAA-1114 / GMI1000) (Ralstonia solanacearum).